We begin with the raw amino-acid sequence, 202 residues long: uncharacterized protein (202 aa).

Belongs to the NAD(P)H dehydrogenase (quinone) family.

This is an uncharacterized protein from Haemophilus influenzae (strain ATCC 51907 / DSM 11121 / KW20 / Rd).